We begin with the raw amino-acid sequence, 1254 residues long: Receptor tyrosine-protein kinase erbB-2 (1254 aa).

The first 22 residues, 1–22 (MELAAWCGWGLLLALLSPGASG), serve as a signal peptide directing secretion. Residues 23–652 (TQVCTGTDMK…PAEQRASPAT (630 aa)) are Extracellular-facing. Cysteine 26 and cysteine 53 are joined by a disulfide. 3 N-linked (GlcNAc...) asparagine glycosylation sites follow: asparagine 68, asparagine 125, and asparagine 187. Cystine bridges form between cysteine 162/cysteine 192, cysteine 195/cysteine 204, cysteine 199/cysteine 212, cysteine 236/cysteine 244, cysteine 240/cysteine 252, cysteine 255/cysteine 264, cysteine 268/cysteine 295, cysteine 299/cysteine 311, cysteine 315/cysteine 331, cysteine 334/cysteine 338, cysteine 342/cysteine 367, cysteine 475/cysteine 504, cysteine 511/cysteine 520, and cysteine 515/cysteine 528. Residue asparagine 259 is glycosylated (N-linked (GlcNAc...) asparagine). Asparagine 530 carries an N-linked (GlcNAc...) asparagine glycan. Intrachain disulfides connect cysteine 531/cysteine 540, cysteine 544/cysteine 560, cysteine 563/cysteine 576, cysteine 567/cysteine 584, cysteine 587/cysteine 596, cysteine 600/cysteine 623, cysteine 626/cysteine 634, and cysteine 630/cysteine 642. N-linked (GlcNAc...) asparagine glycosylation is present at asparagine 571. The N-linked (GlcNAc...) asparagine glycan is linked to asparagine 629. The helical transmembrane segment at 653-675 (SIIATVVGILLFLVIGVVVGILI) threads the bilayer. The interval 676 to 689 (KRRRQKIRKYTMRR) is required for interaction with KPNB1 and EEA1. Positions 676–689 (KRRRQKIRKYTMRR) match the Nuclear localization signal motif. Residues 676 to 1254 (KRRRQKIRKY…PEYLGLDVPV (579 aa)) lie on the Cytoplasmic side of the membrane. The Protein kinase domain occupies 720–987 (LRKVKVLGSG…RMARDPQRFV (268 aa)). ATP-binding positions include 726-734 (LGSGAFGTV) and lysine 753. Aspartate 845 serves as the catalytic Proton acceptor. Phosphotyrosine is present on tyrosine 877. Disordered stretches follow at residues 1029 to 1116 (GFFF…SEDP) and 1133 to 1179 (CSPQ…GKNG). Phosphoserine occurs at positions 1054, 1078, 1083, and 1107. Tyrosine 1112 is subject to Phosphotyrosine. Tyrosine 1139 is subject to Phosphotyrosine; by autocatalysis. Over residues 1146–1161 (RPQPPLTPEGPLPPVR) the composition is skewed to pro residues. Threonine 1166 carries the phosphothreonine modification. The interaction with PIK3C2B stretch occupies residues 1195–1197 (EYL). Tyrosine 1196 carries the post-translational modification Phosphotyrosine. The interval 1223–1254 (DQDPSERGSPPNTFEGTPTAENPEYLGLDVPV) is disordered. A compositionally biased stretch (polar residues) spans 1232–1242 (PPNTFEGTPTA). At tyrosine 1247 the chain carries Phosphotyrosine; by autocatalysis.

The protein belongs to the protein kinase superfamily. Tyr protein kinase family. EGF receptor subfamily. In terms of assembly, homodimer. Heterodimer with EGFR, ERBB3 and ERBB4. Part of a complex with EGFR and either PIK3C2A or PIK3C2B. May interact with PIK3C2B when phosphorylated on Tyr-1196. Interacts with PRKCABP and PLXNB1. Interacts (when phosphorylated on Tyr-1247) with MEMO. Interacts with MUC1. Interacts (when phosphorylated on Tyr-1139) with GRB7 (via SH2 domain). Interacts (when phosphorylated on Tyr-1247) with ERBIN. Interacts with SRC, KPNB1, RANBP2, EEA1, CRM1, CLTC, PTK6, RPA194, MYOC and ACTB. Interacts (preferentially with the tyrosine phosphorylated form) with CPNE3; this interaction occurs at the cell membrane and is increased in a growth factor heregulin-dependent manner. Interacts with HSP90AA1 and HSP90AB1 in an ATP-dependent manner; the interaction suppresses ERBB2 kinase activity. Interacts with SORL1; this interaction regulates ERBB2 subcellular distribution by promoting its recycling after internalization from endosomes back to the plasma membrane, hence stimulates ERBB2-mediated signaling. Interacts with SH3BGRL. Interacts with ROR1. Post-translationally, autophosphorylated. Autophosphorylation occurs in trans, i.e. one subunit of the dimeric receptor phosphorylates tyrosine residues on the other subunit. Ligand-binding increases phosphorylation on tyrosine residues. Signaling via SEMA4C promotes phosphorylation at Tyr-1247. Dephosphorylated by PTPN12.

It is found in the cell membrane. It localises to the cell projection. The protein localises to the ruffle membrane. The protein resides in the early endosome. Its subcellular location is the cytoplasm. It is found in the perinuclear region. It localises to the nucleus. It carries out the reaction L-tyrosyl-[protein] + ATP = O-phospho-L-tyrosyl-[protein] + ADP + H(+). Functionally, protein tyrosine kinase that is part of several cell surface receptor complexes, but that apparently needs a coreceptor for ligand binding. Essential component of a neuregulin-receptor complex, although neuregulins do not interact with it alone. GP30 is a potential ligand for this receptor. Regulates outgrowth and stabilization of peripheral microtubules (MTs). Upon ERBB2 activation, the MEMO1-RHOA-DIAPH1 signaling pathway elicits the phosphorylation and thus the inhibition of GSK3B at cell membrane. This prevents the phosphorylation of APC and CLASP2, allowing its association with the cell membrane. In turn, membrane-bound APC allows the localization of MACF1 to the cell membrane, which is required for microtubule capture and stabilization. Its function is as follows. In the nucleus is involved in transcriptional regulation. Associates with the 5'-TCAAATTC-3' sequence in the PTGS2/COX-2 promoter and activates its transcription. Implicated in transcriptional activation of CDKN1A; the function involves STAT3 and SRC. Involved in the transcription of rRNA genes by RNA Pol I and enhances protein synthesis and cell growth. In Mesocricetus auratus (Golden hamster), this protein is Receptor tyrosine-protein kinase erbB-2 (ERBB2).